Consider the following 297-residue polypeptide: N-acetylneuraminate lyase (297 aa).

Residues Ser-47 and Thr-48 each contribute to the aceneuramate site. Tyr-137 acts as the Proton donor in catalysis. The Schiff-base intermediate with substrate role is filled by Lys-165. Thr-167, Gly-189, Asp-191, Glu-192, and Ser-208 together coordinate aceneuramate.

The protein belongs to the DapA family. NanA subfamily. In terms of assembly, homotetramer.

The protein resides in the cytoplasm. It carries out the reaction aceneuramate = aldehydo-N-acetyl-D-mannosamine + pyruvate. Its pathway is amino-sugar metabolism; N-acetylneuraminate degradation; D-fructose 6-phosphate from N-acetylneuraminate: step 1/5. In terms of biological role, catalyzes the reversible aldol cleavage of N-acetylneuraminic acid (sialic acid; Neu5Ac) to form pyruvate and N-acetylmannosamine (ManNAc) via a Schiff base intermediate. The sequence is that of N-acetylneuraminate lyase from Escherichia coli (strain SMS-3-5 / SECEC).